Reading from the N-terminus, the 201-residue chain is Pectinesterase inhibitor 7 (201 aa).

The signal sequence occupies residues 1–24; the sequence is MARNFELSLILFVLYLSTAAIVMA. 2 disulfides stabilise this stretch: C42–C51 and C108–C159.

This sequence belongs to the PMEI family. Binds reversibly to PME3 to inhibit its activity; the stability of the PME3-PMEI7 complex and the inhibition of the pectin methylesterase (PME) activity is pH-dependent, based on protonation status of amino-acids at the complex interface. In terms of tissue distribution, accumulates in etiolated hypocotyls (at protein level).

It is found in the secreted. It localises to the extracellular space. The protein resides in the apoplast. The protein localises to the cell wall. Its function is as follows. Pectin methylesterase (PME) inhibitor that can target PME3 in a pH-dependent manner, mainly in slightly acidic conditions (pH 6.0 and 5.0) but not at pH 7.0; this processus relies on changes in the protonation of amino acids involved in intermolecular and intramolecular interactions. Regulates homogalacturonan methylesterification during plant development. This is Pectinesterase inhibitor 7 from Arabidopsis thaliana (Mouse-ear cress).